We begin with the raw amino-acid sequence, 432 residues long: Putative cyclin-F1-4 (432 aa).

It belongs to the cyclin family. Cyclin F subfamily.

The sequence is that of Putative cyclin-F1-4 (CycF1-4) from Oryza sativa subsp. japonica (Rice).